The sequence spans 54 residues: Sperm protamine P3 (54 aa).

The disordered stretch occupies residues 1-54 (RRRRRRGKGKGGKKKKGKKRRRRGRKGKGKGKKKGKRKGKRGGKRRRRRRKGKK).

As to expression, gonads.

It is found in the nucleus. It localises to the chromosome. Functionally, protamines substitute for histones in the chromatin of sperm during the haploid phase of spermatogenesis. They compact sperm DNA into a highly condensed, stable and inactive complex. The chain is Sperm protamine P3 from Bolinus brandaris (Purple dye murex).